The sequence spans 139 residues: NADH dehydrogenase [ubiquinone] 1 alpha subcomplex subunit MCI4 (139 aa).

The protein belongs to the complex I NDUFA5 subunit family.

Its subcellular location is the mitochondrion inner membrane. Functionally, accessory subunit of the mitochondrial membrane respiratory chain NADH dehydrogenase (Complex I), that is believed not to be involved in catalysis. Complex I functions in the transfer of electrons from NADH to the respiratory chain. The immediate electron acceptor for the enzyme is believed to be ubiquinone. Involved in osmotic and oxidative resistance, yeast to hypha transition and the ability to damage and invade oral epithelial cells. The chain is NADH dehydrogenase [ubiquinone] 1 alpha subcomplex subunit MCI4 from Candida albicans (strain SC5314 / ATCC MYA-2876) (Yeast).